Here is a 537-residue protein sequence, read N- to C-terminus: Chaperonin GroEL 2 (537 aa).

ATP-binding positions include 29–32, 86–90, Gly413, 477–479, and Asp493; these read TLGP, DGTTT, and NAA.

The protein belongs to the chaperonin (HSP60) family. Forms a cylinder of 14 subunits composed of two heptameric rings stacked back-to-back. Interacts with the co-chaperonin GroES.

It localises to the cytoplasm. It catalyses the reaction ATP + H2O + a folded polypeptide = ADP + phosphate + an unfolded polypeptide.. Together with its co-chaperonin GroES, plays an essential role in assisting protein folding. The GroEL-GroES system forms a nano-cage that allows encapsulation of the non-native substrate proteins and provides a physical environment optimized to promote and accelerate protein folding. The polypeptide is Chaperonin GroEL 2 (Rhodococcus jostii (strain RHA1)).